A 296-amino-acid polypeptide reads, in one-letter code: Nucleotide-binding protein SSA_0810 (296 aa).

Residue 13-20 (GMSGAGKT) participates in ATP binding. 63–66 (DMRS) contributes to the GTP binding site. The disordered stretch occupies residues 277-296 (WPVNSSHRDKNRRKETVNRS). The segment covering 282–296 (SHRDKNRRKETVNRS) has biased composition (basic and acidic residues).

Belongs to the RapZ-like family.

Its function is as follows. Displays ATPase and GTPase activities. The protein is Nucleotide-binding protein SSA_0810 of Streptococcus sanguinis (strain SK36).